We begin with the raw amino-acid sequence, 97 residues long: uncharacterized protein (97 aa).

This is an uncharacterized protein from Orgyia pseudotsugata multicapsid polyhedrosis virus (OpMNPV).